The chain runs to 76 residues: Large ribosomal subunit protein eL38 (76 aa).

It belongs to the eukaryotic ribosomal protein eL38 family.

In Lysiphlebus testaceipes (Greenbugs aphid parastoid), this protein is Large ribosomal subunit protein eL38 (RpL38).